Consider the following 326-residue polypeptide: Ribosomal large subunit pseudouridine synthase D (326 aa).

D144 is an active-site residue.

This sequence belongs to the pseudouridine synthase RluA family.

It localises to the cytoplasm. The enzyme catalyses uridine(1911/1915/1917) in 23S rRNA = pseudouridine(1911/1915/1917) in 23S rRNA. In terms of biological role, responsible for synthesis of pseudouridine from uracil at positions 1911, 1915 and 1917 in 23S ribosomal RNA. The chain is Ribosomal large subunit pseudouridine synthase D from Borreliella burgdorferi (strain ATCC 35210 / DSM 4680 / CIP 102532 / B31) (Borrelia burgdorferi).